We begin with the raw amino-acid sequence, 150 residues long: MAMEMAMMGLLGTVVGASAMGIGGIAKSIAEAYVPGVAAAKDRRQQMNVDLQARRYEAVRVWRSGLCSASNAYRQWEAGSRDTHAPNVVGDEWFEGLRPHLPTTGEAAKFRTAYEVRCDNPTLMVLSLEIGRIEKEWMVEASGRTPKHRG.

The N-terminal stretch at 1-21 is a signal peptide; it reads MAMEMAMMGLLGTVVGASAMG.

This is an uncharacterized protein from Mycobacterium tuberculosis (strain CDC 1551 / Oshkosh).